We begin with the raw amino-acid sequence, 703 residues long: MEKPRGTEEAPSSEPMEEEEEDDLDLFGGYDSFRSYNSSAGSESSSYLEESSEAENEDREAGELPTSPLHLFSSANNRSLDGSGSEPAVCEMCGIVGTREAFFSKTKRFCSVSCSRSYSSNSKKASILARLQGKPPTKKAKVLHKAAWSAKIGAFLHAQGTGQLADGTPTGQDALVLGFDWGKFLKDHSYKAAPVSCFKHVPLYDQWEDVMKGMKVEVLNSDAVLPSRVYWIATVIQAAGYRVLLRYEGFENDASHDFWCNLGTVDVHPIGWCAINSKILVPPRTIHAKFTDWKSYLMKRLVGSRTLPADFHIKMVESMKYPFRQGMRLEVVDKTQVSRTRMAVVDTVIGGRLRLLYEDGDSDDDFWCHMWSPLIHPVGWSRRVGHGIKMSDRRCDMSHHPTFRKIYCDAVPYLFKKVRAVYTEGGWFEEGMKLEAIDPLNLGSICVATICKVLLDGYLMICVDGGPSTDGSDWFCYHASSHAIFPATFCQKNDIELTPPKGYETQPFAWETYLEKTKSKAAPARLFNMDCPNHGFKVGMKLEAVDLMEPRLICVATVKRVVHRLLSIHFDGWDNEYDQWVDCESPDIYPVGWCELTGYQLQPPVSAEPNTPQKGKDTTKKKKKQFGKKRKRIPSAKTRPLRQGSKKPLLEDNLEALGVSEPVPDDIIAVCVKEEHQDISSLDRSPSPQLPLPIESIKQERNN.

The interval 1–85 (MEKPRGTEEA…NNRSLDGSGS (85 aa)) is disordered. A Phosphoserine modification is found at Ser-13. Positions 15 to 25 (PMEEEEEDDLD) are enriched in acidic residues. Positions 35 to 49 (SYNSSAGSESSSYLE) are enriched in low complexity. Over residues 50 to 60 (ESSEAENEDRE) the composition is skewed to acidic residues. The residue at position 67 (Ser-67) is a Phosphoserine. Polar residues predominate over residues 73 to 82 (SSANNRSLDG). The FCS-type zinc finger occupies 81–116 (DGSGSEPAVCEMCGIVGTREAFFSKTKRFCSVSCSR). Zn(2+)-binding residues include Cys-90, Cys-93, Cys-110, and Cys-114. 4 MBT repeats span residues 179–283 (FDWG…LVPP), 291–391 (TDWK…IKMS), 397–500 (MSHH…LTPP), and 508–604 (FAWE…LQPP). Ser-338 carries the post-translational modification Phosphoserine. Lys-405 participates in a covalent cross-link: Glycyl lysine isopeptide (Lys-Gly) (interchain with G-Cter in SUMO2). The tract at residues 604–649 (PVSAEPNTPQKGKDTTKKKKKQFGKKRKRIPSAKTRPLRQGSKKPL) is disordered. The span at 619–634 (TKKKKKQFGKKRKRIP) shows a compositional bias: basic residues. Glycyl lysine isopeptide (Lys-Gly) (interchain with G-Cter in SUMO2) cross-links involve residues Lys-647 and Lys-673. The disordered stretch occupies residues 675 to 703 (EHQDISSLDRSPSPQLPLPIESIKQERNN). Phosphoserine occurs at positions 681, 685, and 687. A Glycyl lysine isopeptide (Lys-Gly) (interchain with G-Cter in SUMO1); alternate cross-link involves residue Lys-698. A Glycyl lysine isopeptide (Lys-Gly) (interchain with G-Cter in SUMO2); alternate cross-link involves residue Lys-698.

In terms of assembly, part of the E2F6.com-1 complex in G0 phase composed of E2F6, MGA, MAX, TFDP1, CBX3, BAT8, EUHMTASE1, RING1, RNF2, MBLR, BAT8 and YAF2. Phosphorylated. As to expression, ubiquitous.

The protein localises to the nucleus. Putative Polycomb group (PcG) protein. PcG proteins maintain the transcriptionally repressive state of genes, probably via a modification of chromatin, rendering it heritably changed in its expressibility. Its association with a chromatin-remodeling complex suggests that it may contribute to prevent expression of genes that trigger the cell into mitosis. Binds to monomethylated and dimethylated 'Lys-20' on histone H4. Binds histone H3 peptides that are monomethylated or dimethylated on 'Lys-4', 'Lys-9' or 'Lys-27'. This Mus musculus (Mouse) protein is Lethal(3)malignant brain tumor-like protein 2 (L3mbtl2).